Reading from the N-terminus, the 92-residue chain is Putative regulatory protein CTN_0877 (92 aa).

Belongs to the RemA family.

The sequence is that of Putative regulatory protein CTN_0877 from Thermotoga neapolitana (strain ATCC 49049 / DSM 4359 / NBRC 107923 / NS-E).